A 334-amino-acid polypeptide reads, in one-letter code: Aspartate carbamoyltransferase catalytic subunit (334 aa).

Residues Arg-71 and Thr-72 each coordinate carbamoyl phosphate. Lys-99 contributes to the L-aspartate binding site. 3 residues coordinate carbamoyl phosphate: Arg-121, His-151, and Gln-154. 2 residues coordinate L-aspartate: Arg-184 and Arg-239. Positions 280 and 281 each coordinate carbamoyl phosphate.

It belongs to the aspartate/ornithine carbamoyltransferase superfamily. ATCase family. Heterododecamer (2C3:3R2) of six catalytic PyrB chains organized as two trimers (C3), and six regulatory PyrI chains organized as three dimers (R2).

It catalyses the reaction carbamoyl phosphate + L-aspartate = N-carbamoyl-L-aspartate + phosphate + H(+). It functions in the pathway pyrimidine metabolism; UMP biosynthesis via de novo pathway; (S)-dihydroorotate from bicarbonate: step 2/3. Functionally, catalyzes the condensation of carbamoyl phosphate and aspartate to form carbamoyl aspartate and inorganic phosphate, the committed step in the de novo pyrimidine nucleotide biosynthesis pathway. The sequence is that of Aspartate carbamoyltransferase catalytic subunit from Pseudomonas fluorescens (strain Pf0-1).